Here is a 272-residue protein sequence, read N- to C-terminus: Peptidoglycolipid exporter Gap (272 aa).

Helical transmembrane passes span Ile-5 to Val-25, Val-36 to Val-56, Ile-79 to Leu-99, Leu-171 to Val-191, Ile-206 to Ser-226, and Ile-252 to Ile-272.

This sequence belongs to the peptidoglycolipid addressing protein (GAP) (TC 2.A.116) family.

Its subcellular location is the cell inner membrane. Its function is as follows. Required for the transport of peptidoglycolipids (GPLs) to the cell surface. The protein is Peptidoglycolipid exporter Gap of Mycolicibacterium smegmatis (strain ATCC 700084 / mc(2)155) (Mycobacterium smegmatis).